A 159-amino-acid chain; its full sequence is Small ribosomal subunit protein uS7c (159 aa).

This sequence belongs to the universal ribosomal protein uS7 family. Part of the 30S ribosomal subunit.

Its subcellular location is the plastid. It localises to the chloroplast. In terms of biological role, one of the primary rRNA binding proteins, it binds directly to 16S rRNA where it nucleates assembly of the head domain of the 30S subunit. In Bigelowiella natans (Pedinomonas minutissima), this protein is Small ribosomal subunit protein uS7c (rps7).